Reading from the N-terminus, the 451-residue chain is Cyclin-dependent kinase 18 (451 aa).

The interval 39–61 (RNEDGRDEPGQLSPGVQYQQRQN) is disordered. Ser51 bears the Phosphoserine mark. The segment covering 52–61 (PGVQYQQRQN) has biased composition (polar residues). Residues Ser66 and Ser109 each carry the phosphoserine modification. One can recognise a Protein kinase domain in the interval 121-402 (YVKLDKLGEG…AEAALSHPYF (282 aa)). Residues 127–135 (LGEGTYATV) and Lys150 contribute to the ATP site. The Proton acceptor role is filled by Asp242. 2 positions are modified to phosphoserine: Ser417 and Ser420.

Belongs to the protein kinase superfamily. CMGC Ser/Thr protein kinase family. CDC2/CDKX subfamily. As to expression, in brain, kidney, intestine and at a much lower level, in fetal tissues.

It carries out the reaction L-seryl-[protein] + ATP = O-phospho-L-seryl-[protein] + ADP + H(+). The enzyme catalyses L-threonyl-[protein] + ATP = O-phospho-L-threonyl-[protein] + ADP + H(+). In terms of biological role, may play a role in signal transduction cascades in terminally differentiated cells. In Rattus norvegicus (Rat), this protein is Cyclin-dependent kinase 18 (Cdk18).